The following is a 486-amino-acid chain: Bile acid receptor (486 aa).

K132 is covalently cross-linked (Glycyl lysine isopeptide (Lys-Gly) (interchain with G-Cter in SUMO1)). Positions 134-209 (DELCVVCGDR…MGMLAECMYT (76 aa)) form a DNA-binding region, nuclear receptor. An NR C4-type zinc finger spans residues 137–157 (CVVCGDRASGYHYNALTCEGC). A phosphoserine; by PKC/PRKCA mark is found at S145 and S164. K167 is subject to N6-acetyllysine; by EP300. The NR C4-type zinc-finger motif lies at 173 to 197 (CKNGGNCVMDMYMRRKCQECRLRKC). K220 carries the post-translational modification N6-methyllysine; by SETD7. K227 carries the post-translational modification N6-acetyllysine; by EP300. The 225-residue stretch at 262-486 (DQQTLLHFIM…PLLCEIWDVQ (225 aa)) folds into the NR LBD domain. Residue K289 forms a Glycyl lysine isopeptide (Lys-Gly) (interchain with G-Cter in SUMO1) linkage. Positions 345, 375, and 383 each coordinate chenodeoxycholate. The residue at position 456 (T456) is a Phosphothreonine; by PKC/PRKCZ. H461 contributes to the chenodeoxycholate binding site.

This sequence belongs to the nuclear hormone receptor family. NR1 subfamily. In terms of assembly, heterodimer (via C-terminus) with RXRA (via DBD); the heterodimerization enhances the binding affinity for LXXLL motifs from coactivators. Binds DNA predominantly as a heterodimer with RXRA. After activation by agonist binding interacts with coactivators. Interacts with NCOA1, NCOA2, PPARGC1A, CARM1, SETD7, PRMT1, GPS2, SMARCA4 and MED1. Interacts with EP300 and SMARCD1. Interacts with XRCC5 and XRCC6; decreasing NR1H4/FXR transactivation activity towards ABCB11/BSEP. Interacts with PAGR1 and NCOA6; indicative for an association with an MLL2/MLL3 complex (ASCOM). Acetylated by EP300. Lys-227 as is the major acetylation site for EP300; the dynamicly regulated acetylation inhibits heterodimerization with RXRA and transactivation activity. Deacetylated by SIRT1. Post-translationally, methylation may increase transactivation of target genes. In terms of processing, phosphorylation by PKC/PRKCA increases transactivation activity by promoting association with PPARGC1A. Sumoylated upon ligand binding. As to expression, liver and hepatocyte-related cells express mainly FXRalpha1-type isoforms with isoform 3 and isoform 4 in approximately equal proportions. In intestine and kidney mainly FXRalpha2-type isoforms are expressed with isoform 1 and isoform 2 in approximately equal proportions. Expressed in pancreatic beta cells and macrophages.

It is found in the nucleus. Ligand-activated transcription factor. Receptor for bile acids (BAs) such as chenodeoxycholic acid (CDCA), lithocholic acid, deoxycholic acid (DCA) and allocholic acid (ACA). Plays a essential role in BA homeostasis through the regulation of genes involved in BA synthesis, conjugation and enterohepatic circulation. Also regulates lipid and glucose homeostasis and is involved innate immune response. The FXR-RXR heterodimer binds predominantly to farnesoid X receptor response elements (FXREs) containing two inverted repeats of the consensus sequence 5'-AGGTCA-3' in which the monomers are spaced by 1 nucleotide (IR-1) but also to tandem repeat DR1 sites with lower affinity, and can be activated by either FXR or RXR-specific ligands. It is proposed that monomeric nuclear receptors such as NR5A2/LRH-1 bound to coregulatory nuclear responsive element (NRE) halfsites located in close proximity to FXREs modulate transcriptional activity. In the liver activates transcription of the corepressor NR0B2 thereby indirectly inhibiting CYP7A1 and CYP8B1 (involved in BA synthesis) implicating at least in part histone demethylase KDM1A resulting in epigenomic repression, and SLC10A1/NTCP (involved in hepatic uptake of conjugated BAs). Activates transcription of the repressor MAFG (involved in regulation of BA synthesis). Activates transcription of SLC27A5/BACS and BAAT (involved in BA conjugation), ABCB11/BSEP (involved in bile salt export) by directly recruiting histone methyltransferase CARM1, and ABCC2/MRP2 (involved in secretion of conjugated BAs) and ABCB4 (involved in secretion of phosphatidylcholine in the small intestine). Activates transcription of SLC27A5/BACS and BAAT (involved in BA conjugation), ABCB11/BSEP (involved in bile salt export) by directly recruiting histone methyltransferase CARM1, and ABCC2/MRP2 (involved in secretion of conjugated BAs) and ABCB4 (involved in secretion of phosphatidylcholine in the small intestine). In the intestine activates FGF19 expression and secretion leading to hepatic CYP7A1 repression. The function also involves the coordinated induction of hepatic KLB/beta-klotho expression. Regulates transcription of liver UGT2B4 and SULT2A1 involved in BA detoxification; binding to the UGT2B4 promoter seems to imply a monomeric transactivation independent of RXRA. Modulates lipid homeostasis by activating liver NR0B2/SHP-mediated repression of SREBF1 (involved in de novo lipogenesis), expression of PLTP (involved in HDL formation), SCARB1 (involved in HDL hepatic uptake), APOE, APOC1, APOC4, PPARA (involved in beta-oxidation of fatty acids), VLDLR and SDC1 (involved in the hepatic uptake of LDL and IDL remnants), and inhibiting expression of MTTP (involved in VLDL assembly. Increases expression of APOC2 (promoting lipoprotein lipase activity implicated in triglyceride clearance). Transrepresses APOA1 involving a monomeric competition with NR2A1 for binding to a DR1 element. Also reduces triglyceride clearance by inhibiting expression of ANGPTL3 and APOC3 (both involved in inhibition of lipoprotein lipase). Involved in glucose homeostasis by modulating hepatic gluconeogenesis through activation of NR0B2/SHP-mediated repression of respective genes. Modulates glycogen synthesis (inducing phosphorylation of glycogen synthase kinase-3). Modulates glucose-stimulated insulin secretion and is involved in insulin resistance. Involved in intestinal innate immunity. Plays a role in protecting the distal small intestine against bacterial overgrowth and preservation of the epithelial barrier. Down-regulates inflammatory cytokine expression in several types of immune cells including macrophages and mononuclear cells. Mediates trans-repression of TLR4-induced cytokine expression; the function seems to require its sumoylation and prevents N-CoR nuclear receptor corepressor clearance from target genes such as IL1B and NOS2. Involved in the TLR9-mediated protective mechanism in intestinal inflammation. Plays an anti-inflammatory role in liver inflammation; proposed to inhibit pro-inflammatory (but not antiapoptotic) NF-kappa-B signaling). Its function is as follows. Promotes transcriptional activation of target genes NR0B2/SHP (inducible by unconjugated CDCA), SLC51B/OSTB (inducible by unconjugated CDCA and DCA) and FABP6/IBAP; low activity for ABCB11/BSEP (inducible by unconjugated CDCA, DCA and ACA); not inducible by taurine- and glycine-amidated CDCA. In terms of biological role, promotes transcriptional activation of target genes ABCB11/BSEP (inducible by unconjugated CDCA, DCA and ACA), NR0B2/SHP (inducible by unconjugated CDCA DCA and ACA), SLC51B/OSTB (inducible by unconjugated CDCA and DCA) and FABP6/IBAP; not inducible by taurine- and glycine-amidated CDCA. Functionally, promotes transcriptional activation of target genes NR0B2/SHP (inducible by unconjugated CDCA), SLC51B/OSTB (inducible by unconjugated CDCA and DCA) and IBAP; low activity for ABCB11/BSEP (inducible by unconjugated CDCA, DCA and ACA); not inducible by taurine- and glycine-amidated CDCA. Promotes transcriptional activation of target genes ABCB11/BSEP (inducible by unconjugated CDCA, ACA and DCA), NR0B2/SHP (inducible by unconjugated CDCA, ACA and DCA), SLC51B/OSTB (inducible by unconjugated CDCA and DCA) and FABP6/IBAP; most efficient isoform compared to isoforms 1 to 3; not inducible by taurine- and glycine-amidated CDCA. The chain is Bile acid receptor (NR1H4) from Homo sapiens (Human).